We begin with the raw amino-acid sequence, 469 residues long: ATP synthase subunit beta (469 aa).

156–163 is a binding site for ATP; that stretch reads GGAGVGKT.

It belongs to the ATPase alpha/beta chains family. F-type ATPases have 2 components, CF(1) - the catalytic core - and CF(0) - the membrane proton channel. CF(1) has five subunits: alpha(3), beta(3), gamma(1), delta(1), epsilon(1). CF(0) has three main subunits: a(1), b(2) and c(9-12). The alpha and beta chains form an alternating ring which encloses part of the gamma chain. CF(1) is attached to CF(0) by a central stalk formed by the gamma and epsilon chains, while a peripheral stalk is formed by the delta and b chains.

Its subcellular location is the cell membrane. It catalyses the reaction ATP + H2O + 4 H(+)(in) = ADP + phosphate + 5 H(+)(out). Its function is as follows. Produces ATP from ADP in the presence of a proton gradient across the membrane. The catalytic sites are hosted primarily by the beta subunits. This chain is ATP synthase subunit beta, found in Bacillus cereus (strain AH820).